The sequence spans 577 residues: Polyadenylate-binding protein, cytoplasmic and nuclear (577 aa).

Residues 1-10 (MADITDKTAE) are compositionally biased toward basic and acidic residues. The tract at residues 1-36 (MADITDKTAEQLENLNIQDDQKQAATGSESQSVENS) is disordered. An N-acetylalanine modification is found at alanine 2. Lysine 7 is covalently cross-linked (Glycyl lysine isopeptide (Lys-Gly) (interchain with G-Cter in ubiquitin)). A required and sufficient for nuclear export region spans residues 9–61 (AEQLENLNIQDDQKQAATGSESQSVENSSASLYVGDLEPSVSEAHLYDIFSPI). Positions 11 to 27 (QLENLNIQDDQKQAATG) are enriched in polar residues. The Nuclear export signal motif lies at 12–17 (LENLNI). RRM domains lie at 38 to 116 (ASLY…WSQR), 126 to 203 (GNIF…PHLS), 219 to 296 (TNLY…RAQK), and 322 to 399 (VNLF…IAQR). Arginine 107 carries the omega-N-methylarginine modification. Serine 249 is modified (phosphoserine). The required and sufficient for nuclear import stretch occupies residues 281–317 (DSELNGEKLYVGRAQKKNERMHVLKKQYEAYRLEKMA). Serine 332 carries the phosphoserine modification. Lysine 337 participates in a covalent cross-link: Glycyl lysine isopeptide (Lys-Gly) (interchain with G-Cter in ubiquitin). Position 405 is a phosphoserine (serine 405). The interaction with SUP35 stretch occupies residues 473–577 (PPQFRNGPVY…KEQEQQTEQA (105 aa)). Positions 489 to 568 (GFPRNANDNN…ASAAYESFKK (80 aa)) constitute a PABC domain.

This sequence belongs to the polyadenylate-binding protein type-1 family. Binds to poly(A) mRNA to form a periodic structure with a packing density of one molecule per 25 adenylate residues. Interacts with the nuclear export factor CRM1 and with the importin SXM1. Interacts with RNA15, a component of the cleavage factor IA (CFIA) complex. Interacts with translation initiation factor eIF4G (TIF4631 or TIF4632) and release factor eRF3 (SUP35). Interacts with the PAB-dependent poly(A)-nuclease (PAN) complex regulatory subunit PAN3. Interacts with ARF1, DCP1, PBP1, the Hsp70 chaperone SSA1, and TPA1. Interacts with PAT1 in an RNA-dependent manner.

It is found in the cytoplasm. The protein resides in the nucleus. In terms of biological role, binds the poly(A) tail of mRNA. Appears to be an important mediator of the multiple roles of the poly(A) tail in mRNA biogenesis, stability and translation. In the nucleus, interacts with the nuclear cleavage factor IA (CFIA), which is required for both mRNA cleavage and polyadenylation. Is also required for efficient mRNA export to the cytoplasm. Acts in concert with a poly(A)-specific nuclease (PAN) to affect poly(A) tail shortening, which may occur concomitantly with either nucleocytoplasmic mRNA transport or translational initiation. Regulates PAN activity via interaction with the stimulator PAN3 or the inhibitor PBP1. In the cytoplasm, affects both translation and mRNA decay. Stimulates translation by interaction with translation initiation factor eIF4G, a subunit of the cap-binding complex eIF4F, bringing the 5'- and 3'-ends of the mRNA in proximity. The formation of this circular mRNP structure appears to be critical for the synergistic effects of the cap and the poly(A) tail in facilitating translation initiation, recycling of ribosomes, and mRNA stability. Also regulates translation termination by recruiting eukaryotic release factor 3 (eRF3). Interaction with eRF3 is also required for regulation of normal mRNA decay through translation termination-coupled poly(A) shortening, probably mediated by PAN. Loss of PAB1 from the mRNP after deadenylation triggers mRNA degradation. Inhibits the major cytoplasmic mRNA deadenylase CCR4-NOT complex. Is also associated peripherally with COPI vesicles through its interaction with ARF1, and this is required for correct localization of the asymmetrically distributed ASH1 mRNA. In Saccharomyces cerevisiae (strain ATCC 204508 / S288c) (Baker's yeast), this protein is Polyadenylate-binding protein, cytoplasmic and nuclear (PAB1).